We begin with the raw amino-acid sequence, 877 residues long: MMKKLKASEIRQKYLDFFVEKGHMVEPSAPLVPIDDDTLLWINSGVATLKKYFDGRETPKKPRIVNSQKAIRTNDIENVGFTARHHTFFEMLGNFSIGDYFKQEAIEFAWEFLTSDKWMGMEPDKLYVTIHPEDMEAYNIWHKDIGLEESRIIRIEGNFWDIGEGPSGPNTEIFYDRGEAYGQDDPAEEMYPGGENERYLEVWNLVFSEFNHNKDHSYTPLPNKNIDTGMGLERMASVSQNVRTNYETDLFMPIMNEIEKVSGKQYLVNNEQDVAFKVIADHIRTIAFAISDGALPANEGRGYVLRRLLRRAVRFSQTLGINEPFMYKLVDIVADIMEPYYPNVKEKADFIKRVIKSEEERFHETLEDGLAILNELIKKAKATTNEINGKDAFKLYDTYGFPIELTEEIAVQAGLKVDMTTFESEMQQQRDRARQARQNSQSMQVQSEVLKNITSASTFVGYDTATAQTTLTHLIYNGEEVSQVEAGETVYFMLTETPFYAISGGQVADTGIVYNDNFEIAVSEVTKAPNGQNLHKGVVQFGQVNVGATVSAEVNQNDRRDIQKNHSATHLLHAALKSVLGDHVNQAGSLVEADRLRFDFSHFGPMTNDEIDQVERLVNEEIWKGIDVNIQEMDIASAKEMGAMALFGEKYGDVVRVVNMAPFSIELCGGIHVRNTSEIGLFKIVSESGTGAGVRRIEALTGKAAFLYLEDIQEKFNTMKSQLKVKSDDQVVDKLTQLQDEEKALLKQLEQRDKEITSLKMGNIEDQVEEINGYKVLVTEVDVPNAKAIRSTMDDFKSKLQDTIIILASNVDDKVSMVATVPKSLTNNVKAGDLIKQMAPIVGGKGGGRPDMAQGGGTQPENISKSLSFIKDYIKNL.

4 residues coordinate Zn(2+): H566, H570, C668, and H672.

This sequence belongs to the class-II aminoacyl-tRNA synthetase family. The cofactor is Zn(2+).

The protein resides in the cytoplasm. The enzyme catalyses tRNA(Ala) + L-alanine + ATP = L-alanyl-tRNA(Ala) + AMP + diphosphate. Catalyzes the attachment of alanine to tRNA(Ala) in a two-step reaction: alanine is first activated by ATP to form Ala-AMP and then transferred to the acceptor end of tRNA(Ala). Also edits incorrectly charged Ser-tRNA(Ala) and Gly-tRNA(Ala) via its editing domain. In Staphylococcus aureus (strain USA300 / TCH1516), this protein is Alanine--tRNA ligase.